Consider the following 203-residue polypeptide: Endo-type membrane-bound lytic murein transglycosylase A (203 aa).

Positions methionine 1–glycine 15 are cleaved as a signal peptide. Residue cysteine 16 is the site of N-palmitoyl cysteine attachment. Cysteine 16 carries the S-diacylglycerol cysteine lipid modification.

Belongs to the transglycosylase Slt family.

The protein resides in the cell outer membrane. It carries out the reaction Endolytic cleavage of the (1-&gt;4)-beta-glycosidic linkage between N-acetylmuramic acid (MurNAc) and N-acetylglucosamine (GlcNAc) residues in peptidoglycan with concomitant formation of a 1,6-anhydrobond in the MurNAc residue.. Murein-degrading enzyme. May play a role in recycling of muropeptides during cell elongation and/or cell division. Preferentially cleaves at a distance of more than two disaccharide units from the ends of the glycan chain. This is Endo-type membrane-bound lytic murein transglycosylase A from Salmonella paratyphi C (strain RKS4594).